The primary structure comprises 106 residues: Iron-sulfur cluster assembly protein CyaY (106 aa).

It belongs to the frataxin family.

Involved in iron-sulfur (Fe-S) cluster assembly. May act as a regulator of Fe-S biogenesis. The sequence is that of Iron-sulfur cluster assembly protein CyaY from Dickeya chrysanthemi (Pectobacterium chrysanthemi).